The sequence spans 119 residues: MAKHVTTREKRRARIRRKISGTELRPRLTIYKSLKHMYAQLVDDVAGKTLVSVATTSKALKGELGDEDKTGAAKKVGEALAKAAKAKGIEQVVFDRNGFDYHGRVEAVAAAAREAGLKF.

This sequence belongs to the universal ribosomal protein uL18 family. In terms of assembly, part of the 50S ribosomal subunit; part of the 5S rRNA/L5/L18/L25 subcomplex. Contacts the 5S and 23S rRNAs.

Functionally, this is one of the proteins that bind and probably mediate the attachment of the 5S RNA into the large ribosomal subunit, where it forms part of the central protuberance. The polypeptide is Large ribosomal subunit protein uL18 (Anaeromyxobacter dehalogenans (strain 2CP-C)).